The sequence spans 239 residues: Leucine rich adaptor protein 1 (239 aa).

LRR repeat units lie at residues 55 to 83 (LGDK…LVTL) and 93 to 114 (LLEE…QYSL). Over residues 107–116 (LTSSQYSLTG) the composition is skewed to low complexity. 2 disordered regions span residues 107-139 (LTSS…TDRL) and 200-219 (KPPG…DESA). Phosphoserine is present on residues S118, S126, S129, and S213.

As to quaternary structure, forms a tripartite complex with CDC42BPA/CDC42BPB and MYO18A acting as an adapter connecting both. Its binding to CDC42BPA/CDC42BPB results in their activation by abolition of their negative autoregulation. Interacts with CDC42BPA and CDC42BPB.

The protein resides in the cytoplasm. Its function is as follows. Acts as an activator of the canonical NF-kappa-B pathway and drive the production of pro-inflammatory cytokines. Promotes the antigen (Ag)-presenting and priming function of dendritic cells via the canonical NF-kappa-B pathway. In concert with MYO18A and CDC42BPA/CDC42BPB, is involved in modulating lamellar actomyosin retrograde flow that is crucial to cell protrusion and migration. Activates CDC42BPA/CDC42BPB and targets it to actomyosin through its interaction with MYO18A, leading to MYL9/MLC2 phosphorylation and MYH9/MYH10-dependent actomyosin assembly in the lamella. The protein is Leucine rich adaptor protein 1 (LURAP1) of Homo sapiens (Human).